A 280-amino-acid chain; its full sequence is ATP synthase subunit a (280 aa).

A run of 7 helical transmembrane segments spans residues 45–65, 105–125, 126–146, 159–179, 190–210, 223–243, and 250–270; these read AINV…LFLF, LVAP…LMDL, LPVD…LKVV, LSIF…GGFF, FLFP…PISL, MIFI…LFGG, and AVFH…LTIV.

Belongs to the ATPase A chain family. F-type ATPases have 2 components, CF(1) - the catalytic core - and CF(0) - the membrane proton channel. CF(1) has five subunits: alpha(3), beta(3), gamma(1), delta(1), epsilon(1). CF(0) has three main subunits: a(1), b(2) and c(9-12). The alpha and beta chains form an alternating ring which encloses part of the gamma chain. CF(1) is attached to CF(0) by a central stalk formed by the gamma and epsilon chains, while a peripheral stalk is formed by the delta and b chains.

It is found in the cell inner membrane. In terms of biological role, key component of the proton channel; it plays a direct role in the translocation of protons across the membrane. This Thiobacillus denitrificans (strain ATCC 25259 / T1) protein is ATP synthase subunit a.